Consider the following 586-residue polypeptide: Phosphatidylinositol-3-phosphatase SAC1-A (586 aa).

At 1–519 (MANAYERFNL…TPLHVKKDWK (519 aa)) the chain is on the cytoplasmic side. The region spanning 121-450 (INNVLNTDGF…ANACAKQYAG (330 aa)) is the SAC domain. Residues 451 to 586 (TGALKTDFTR…PKLVQKEKMD (136 aa)) form an essential for phosphatidylinositol-4-phosphate phosphatase activity region. A helical membrane pass occupies residues 520-540 (FLLLPVIMVVAFSMCIICLLM). Residues 541-547 (AGDTWTE) lie on the Lumenal side of the membrane. The helical transmembrane segment at 548-568 (TLAYVLFWGMASALTAAVIVV) threads the bilayer. The Cytoplasmic segment spans residues 569–586 (NGREFVDAPKLVQKEKMD).

It is found in the endoplasmic reticulum membrane. The protein resides in the golgi apparatus membrane. It carries out the reaction a 1,2-diacyl-sn-glycero-3-phospho-(1D-myo-inositol-3-phosphate) + H2O = a 1,2-diacyl-sn-glycero-3-phospho-(1D-myo-inositol) + phosphate. The catalysed reaction is a 1,2-diacyl-sn-glycero-3-phospho-(1D-myo-inositol 4-phosphate) + H2O = a 1,2-diacyl-sn-glycero-3-phospho-(1D-myo-inositol) + phosphate. In terms of biological role, phosphoinositide phosphatase which catalyzes the hydrolysis of phosphatidylinositol 4-phosphate (PtdIns(4)P), phosphatidylinositol 3-phosphate (PtdIns(3)P) and has low activity towards phosphatidylinositol-3,5-bisphosphate (PtdIns(3,5)P2). The protein is Phosphatidylinositol-3-phosphatase SAC1-A (sacm1la) of Danio rerio (Zebrafish).